The primary structure comprises 699 residues: Sarcoplasmic reticulum histidine-rich calcium-binding protein (699 aa).

An N-terminal signal peptide occupies residues 1–28 (MGHHRPWLHASVLWAGVASLLLPPAMTQ). Positions 50–95 (SEEASAELRHHLHSPRDHPDENKDVSTENGHHFWSHPDREKEDEDV) are disordered. The segment covering 55-89 (AELRHHLHSPRDHPDENKDVSTENGHHFWSHPDRE) has biased composition (basic and acidic residues). Threonine 76 is modified (phosphothreonine; by FAM20C). A run of 10 repeats spans residues 106-121 (HRSQ…VSGE), 134-154 (HRGH…HLPS), 155-177 (HRSH…HHHI), 180-213 (HGHR…GHQA), 214-237 (HRHR…HGPS), 238-270 (HRHQ…RHQA), 271-294 (HRHQ…RDPS), 295-318 (HRHR…GHQA), 319-342 (HRHQ…HVPD), and 343-365 (HRHQ…WHQG). Residues 106–342 (HRSQDHKVGD…SGEHHHHVPD (237 aa)) are 6 X approximate tandem repeats. The interval 106–365 (HRSQDHKVGD…DVSTERWHQG (260 aa)) is 4 X tandem repeats, acidic. Serine 119 and serine 145 each carry phosphoserine; by FAM20C. The tract at residues 127–617 (HGGQARGHRG…EDTGPQDAQE (491 aa)) is disordered. 2 stretches are compositionally biased toward basic residues: residues 148–158 (HRHHLPSHRSH) and 173–183 (HHHHILRHGHR). A compositionally biased stretch (acidic residues) spans 187–206 (GEDDEGEEEEEEEEEEEEAS). Positions 231–241 (HHHHGPSHRHQ) are enriched in basic residues. Acidic residues predominate over residues 244–263 (EEDDDDDDDDDDDDDDDDVS). Over residues 288–298 (HHHRDPSHRHR) the composition is skewed to basic residues. The segment covering 302 to 311 (EDDNDDDDVS) has biased composition (acidic residues). The span at 324–335 (HRKEEVEAVSGE) shows a compositional bias: basic and acidic residues. At serine 333 the chain carries Phosphoserine. Residues 336–347 (HHHHVPDHRHQG) are compositionally biased toward basic residues. Phosphoserine; by FAM20C is present on residues serine 358 and serine 431. 2 stretches are compositionally biased toward basic and acidic residues: residues 444–463 (SHQD…EMSH) and 470–481 (VVKDRSHLRKDD). Serine 494 is modified (phosphoserine; by FAM20C). Residues 504-515 (QGEKGTHHGSRD) show a composition bias toward basic and acidic residues. Acidic residues-rich tracts occupy residues 532–551 (QEEE…DEER) and 567–581 (SEEE…EEDE). The residue at position 567 (serine 567) is a Phosphoserine; by FAM20C. The tract at residues 627–673 (CGYCSFCNRCTECESCHCDEENMGEHCDQCQHCQFCYLCPLVCETVC) is metal-binding.

Belongs to the HRC family.

It is found in the sarcoplasmic reticulum lumen. In terms of biological role, may play a role in the regulation of calcium sequestration or release in the SR of skeletal and cardiac muscle. The chain is Sarcoplasmic reticulum histidine-rich calcium-binding protein (HRC) from Homo sapiens (Human).